The chain runs to 98 residues: Ferredoxin-like protein (98 aa).

The 4Fe-4S ferredoxin-type domain occupies 57–87 (GQVEVTVDGCIECGTCRVIAEPTGDIEWSHP).

It to ferredoxins from P.putida and C.tartarivorum, ferredoxin I from A.vinelandii, ferredoxin II from D.desulfuricans.

Could be a 3Fe-4S cluster-containing protein. The protein is Ferredoxin-like protein (fixX) of Bradyrhizobium diazoefficiens (strain JCM 10833 / BCRC 13528 / IAM 13628 / NBRC 14792 / USDA 110).